A 377-amino-acid polypeptide reads, in one-letter code: Queuine tRNA-ribosyltransferase (377 aa).

Residue Asp89 is the Proton acceptor of the active site. Substrate contacts are provided by residues 89–93, Asp143, Gln187, and Gly214; that span reads DSGGF. Residues 245 to 251 form an RNA binding region; the sequence is GVGKPED. Asp264 acts as the Nucleophile in catalysis. Positions 269 to 273 are RNA binding; important for wobble base 34 recognition; that stretch reads TRNAR. Positions 302, 304, 307, and 333 each coordinate Zn(2+).

It belongs to the queuine tRNA-ribosyltransferase family. Homodimer. Within each dimer, one monomer is responsible for RNA recognition and catalysis, while the other monomer binds to the replacement base PreQ1. Requires Zn(2+) as cofactor.

The enzyme catalyses 7-aminomethyl-7-carbaguanine + guanosine(34) in tRNA = 7-aminomethyl-7-carbaguanosine(34) in tRNA + guanine. Its pathway is tRNA modification; tRNA-queuosine biosynthesis. Functionally, catalyzes the base-exchange of a guanine (G) residue with the queuine precursor 7-aminomethyl-7-deazaguanine (PreQ1) at position 34 (anticodon wobble position) in tRNAs with GU(N) anticodons (tRNA-Asp, -Asn, -His and -Tyr). Catalysis occurs through a double-displacement mechanism. The nucleophile active site attacks the C1' of nucleotide 34 to detach the guanine base from the RNA, forming a covalent enzyme-RNA intermediate. The proton acceptor active site deprotonates the incoming PreQ1, allowing a nucleophilic attack on the C1' of the ribose to form the product. After dissociation, two additional enzymatic reactions on the tRNA convert PreQ1 to queuine (Q), resulting in the hypermodified nucleoside queuosine (7-(((4,5-cis-dihydroxy-2-cyclopenten-1-yl)amino)methyl)-7-deazaguanosine). This is Queuine tRNA-ribosyltransferase from Shewanella halifaxensis (strain HAW-EB4).